We begin with the raw amino-acid sequence, 78 residues long: Acyl carrier protein (78 aa).

Residues 2 to 77 enclose the Carrier domain; it reads SNFEERVKKI…AAIDYVVSSA (76 aa). S37 carries the O-(pantetheine 4'-phosphoryl)serine modification.

It belongs to the acyl carrier protein (ACP) family. In terms of processing, 4'-phosphopantetheine is transferred from CoA to a specific serine of apo-ACP by AcpS. This modification is essential for activity because fatty acids are bound in thioester linkage to the sulfhydryl of the prosthetic group.

It is found in the cytoplasm. It functions in the pathway lipid metabolism; fatty acid biosynthesis. Its function is as follows. Carrier of the growing fatty acid chain in fatty acid biosynthesis. Is probably involved in the biosynthesis of docosahexaenoic acid (DHA) which is produced by this bacterium as a fatty acyl component in its membrane lipid. The polypeptide is Acyl carrier protein (Moritella marina (Vibrio marinus)).